The sequence spans 203 residues: MKDLTDKQQAVLAFITAIIKERGFPPTIREIGDEFGITAKGAYDHLKAIEKKGYLKTAKNQSRAIELIRQSPMESLPVQATSIPVIGQVAAGLPIFAEENIESYIPVPDEMAKGNVPMYALRVQGDSMIEVGINDGDIAIIEKRDIARNGEIVVALIEDEATLKVYYKEQDQIRLEARNPKYKPIKTKKATVMGKLIGLYRIY.

Residues 28 to 47 (IREIGDEFGITAKGAYDHLK) constitute a DNA-binding region (H-T-H motif). Catalysis depends on for autocatalytic cleavage activity residues S127 and K164.

Belongs to the peptidase S24 family. In terms of assembly, homodimer.

The enzyme catalyses Hydrolysis of Ala-|-Gly bond in repressor LexA.. Represses a number of genes involved in the response to DNA damage (SOS response), including recA and lexA. In the presence of single-stranded DNA, RecA interacts with LexA causing an autocatalytic cleavage which disrupts the DNA-binding part of LexA, leading to derepression of the SOS regulon and eventually DNA repair. This is LexA repressor from Leptospira interrogans serogroup Icterohaemorrhagiae serovar copenhageni (strain Fiocruz L1-130).